We begin with the raw amino-acid sequence, 1505 residues long: Anaphase-promoting complex subunit 1 (1505 aa).

Belongs to the APC1 family. The APC/C complex is probably composed of at least 12 subunits: apc-2, apc-10, apc-11, cdc-26, emb-1, emb-27, emb-30, mat-1, mat-2, mat-3, such-1 and gfi-3.

The protein operates within protein modification; protein ubiquitination. In terms of biological role, probable component of the anaphase promoting complex/cyclosome (APC/C), a cell cycle-regulated E3 ubiquitin ligase that controls progression through mitosis and the G1 phase of the cell cycle. The APC/C complex acts by mediating ubiquitination and subsequent degradation of target proteins. Developmental role in early embryogenesis and the metaphase to anaphase transition in oocyte and spermatocyte meiosis and mitosis in germ cells. Required for embryonic anterior-posterior axis formation. Plays a role in regulating the abundance of glr-1 receptors in postmitotic neurons, which may in turn control animal locomotion. Involved in regulating GABA neurotransmitter release at neuromuscular junctions in GABA motor neurons. This chain is Anaphase-promoting complex subunit 1, found in Caenorhabditis elegans.